The primary structure comprises 316 residues: Olfactory receptor 10A7 (316 aa).

Topologically, residues Met-1–Val-25 are extracellular. Asn-5 carries an N-linked (GlcNAc...) asparagine glycan. The helical transmembrane segment at Ser-26–Val-46 threads the bilayer. Topologically, residues Thr-47–Ala-54 are cytoplasmic. The chain crosses the membrane as a helical span at residues Leu-55 to Leu-75. Residues Val-76–Thr-99 are Extracellular-facing. A helical transmembrane segment spans residues Gln-100–Tyr-120. Over Asp-121–Ser-139 the chain is Cytoplasmic. The chain crosses the membrane as a helical span at residues Leu-140–Thr-160. The Extracellular portion of the chain corresponds to Ala-161–Met-197. Residues Gln-198–Ser-217 form a helical membrane-spanning segment. Residues Tyr-218–Ala-237 are Cytoplasmic-facing. Residues Phe-238–Thr-258 form a helical membrane-spanning segment. The Extracellular portion of the chain corresponds to Tyr-259–Lys-271. A helical transmembrane segment spans residues Lys-272–Leu-292. Residues Arg-293–Phe-316 lie on the Cytoplasmic side of the membrane.

It belongs to the G-protein coupled receptor 1 family.

The protein localises to the cell membrane. Functionally, odorant receptor. The chain is Olfactory receptor 10A7 (OR10A7) from Homo sapiens (Human).